A 243-amino-acid polypeptide reads, in one-letter code: UPF0246 protein MGAS9429_Spy1799 (243 aa).

It belongs to the UPF0246 family.

The protein is UPF0246 protein MGAS9429_Spy1799 of Streptococcus pyogenes serotype M12 (strain MGAS9429).